Reading from the N-terminus, the 260-residue chain is Thaumatin-like protein 1 (260 aa).

The signal sequence occupies residues 1–32 (MIITVLHSHVSFYFIILSFLFFHALHLVGSDG). Cystine bridges form between cysteine 41–cysteine 255, cysteine 89–cysteine 100, cysteine 105–cysteine 112, cysteine 166–cysteine 245, cysteine 171–cysteine 228, cysteine 179–cysteine 191, cysteine 195–cysteine 204, and cysteine 205–cysteine 215.

Belongs to the thaumatin family. In terms of tissue distribution, expressed only in roots.

In terms of biological role, involved in local responses of roots to colonization by non-pathogenic plant growth-promoting rhizobacteria (PGPR) fluorescent Pseudomonas spp., but seems to not being required for the establishment of subsequent induced systemic resistance (ISR). The sequence is that of Thaumatin-like protein 1 from Arabidopsis thaliana (Mouse-ear cress).